Consider the following 737-residue polypeptide: Protein-glucosylgalactosylhydroxylysine glucosidase (737 aa).

Position 300 to 301 (300 to 301) interacts with substrate; sequence WD. E430 (proton donor) is an active-site residue. 498-499 contributes to the substrate binding site; it reads KQ. The tract at residues 681–737 is disordered; sequence RSAGRIQMSPPKLPGSSSSEFPGRTFSDVRDPLQSPLWVTLGSSSPTESLTVDPASE. Residues 721-730 are compositionally biased toward polar residues; that stretch reads LGSSSPTESL.

Belongs to the glycosyl hydrolase 65 family.

The enzyme catalyses (5R)-5-O-[alpha-D-glucosyl-(1-&gt;2)-beta-D-galactosyl]-5-hydroxy-L-lysyl-[collagen] + H2O = (5R)-5-O-(beta-D-galactosyl)-5-hydroxy-L-lysyl-[collagen] + D-glucose. Catalyzes the hydrolysis of glucose from the disaccharide unit linked to hydroxylysine residues of collagen and collagen-like proteins. The sequence is that of Protein-glucosylgalactosylhydroxylysine glucosidase from Homo sapiens (Human).